A 426-amino-acid chain; its full sequence is Serine--tRNA ligase (426 aa).

Position 233 to 235 (233 to 235 (TSE)) interacts with L-serine. 264-266 (RAE) contributes to the ATP binding site. Glu287 serves as a coordination point for L-serine. Residue 351-354 (EISS) coordinates ATP. Ser387 provides a ligand contact to L-serine.

The protein belongs to the class-II aminoacyl-tRNA synthetase family. Type-1 seryl-tRNA synthetase subfamily. As to quaternary structure, homodimer. The tRNA molecule binds across the dimer.

The protein localises to the cytoplasm. The enzyme catalyses tRNA(Ser) + L-serine + ATP = L-seryl-tRNA(Ser) + AMP + diphosphate + H(+). It carries out the reaction tRNA(Sec) + L-serine + ATP = L-seryl-tRNA(Sec) + AMP + diphosphate + H(+). The protein operates within aminoacyl-tRNA biosynthesis; selenocysteinyl-tRNA(Sec) biosynthesis; L-seryl-tRNA(Sec) from L-serine and tRNA(Sec): step 1/1. Functionally, catalyzes the attachment of serine to tRNA(Ser). Is also able to aminoacylate tRNA(Sec) with serine, to form the misacylated tRNA L-seryl-tRNA(Sec), which will be further converted into selenocysteinyl-tRNA(Sec). The sequence is that of Serine--tRNA ligase from Xanthomonas campestris pv. campestris (strain 8004).